We begin with the raw amino-acid sequence, 1242 residues long: MNATIRPKPAGSRWTDEQWKAIAAGGRDILVAAAAGSGKTAVLVERIIQKVTAEEGAVDIDRLLVVTFTNAAAAEMKARIGEALERELAKRPHSLHLRRQLSLLPRAAISTLHSFCLDVIRKYYYLLDLDPSFRIADETEIELLKEDVLEELLEEEYGKPDNERFFAVVDAYTGDRSDAELQEMIVALYEFSRSHPEPDEWLAGLTSMYDVDERTDIKTLPAARYIAQHAAMELAAARRLIRRALELAEEPGGPRPYAERLREDRDMITDLETRLSGPWAELHRALKALSFGRLPACRGKDYDERLIDEAKSLRDQAKKKVEALRDNVFSLDPSVWLRHMREMKPIVETIANLVRRFAVMFQAAKREKGIVDFSDLEHYCLHILRRRDPETGEWQPSPAALEYQAQFDEVLVDEYQDTNLVQEAILQLVKKGSERTGNLFMVGDVKQSIYRFRLAEPMLFLDKYKRFTADGEEGGMKIDLASNFRSRREVLDGTNFLFAQLMGETVGEMVYDEAAQLKYGADYPEGEDAAPEVMIINRQRAAEEDEEEAAEWEAAELEARLMAKKIKEIVSAPFYVYDRSSGQPRRAMYRDIVILVRSMTNAPQMIEQLQAQGIPAAADLSSGYFQATEISIMLSLLKVIDNPHQDIPLAAVLRSPLFRFDENELAMIRLADPKGTFYEALCSFRQKPAETKEEANAQRKAAAFLERLEGWRTMARRRSLADLIWQLYRDTQFYDFVGALPGGRQRQANLRALYDRARQYESTSFRGLFRFLRFIERLQERGDDLGAARPLGEQEDVVRIMTIHSSKGLEFPIVFLAGLARPFHTRDLHHPYLLDKELGFAARFVHPRLRISYPTLPLLAIQTKKRLELLAEEMRILYVALTRAKEKLYLLASVNDAAKEIEKWKSAASERGWLLPDDVRASARSYLDWIGRALIRHRDGGALAGTKAPEEVASHPSVWRVAIVPAADLRGAEAAREEMDGGVLLALEQGRPVPVEGGWQKEVKRRLLWRYSYEKETAVRAKQSVSELKEQRALFGEQADEWRPRQGTAPVFSRPRFMQEKTLTPAEKGTALHVVMRHLDLQAPLDESWIRSQIVRLVEKELLSAEQAEAVDPAAIAAFFTADLGRRLCAAREVHREVPFSLGLKAAELYGGEGTESGRRVLVQGVIDCVFADECGYVMIDYKTDEVVHRFAGQKEEAARFLLGRYGTQMRLYRRAIEQIWRAPVAECYLYSFDGGFVVAVE.

The UvrD-like helicase ATP-binding domain maps to 12 to 487; sequence SRWTDEQWKA…IDLASNFRSR (476 aa). An ATP-binding site is contributed by 33–40; the sequence is AAAGSGKT. A UvrD-like helicase C-terminal domain is found at 514–808; the sequence is AAQLKYGADY…RIMTIHSSKG (295 aa).

The protein belongs to the helicase family. AddA subfamily. As to quaternary structure, heterodimer of AddA and AddB/RexB. Requires Mg(2+) as cofactor.

It carries out the reaction Couples ATP hydrolysis with the unwinding of duplex DNA by translocating in the 3'-5' direction.. It catalyses the reaction ATP + H2O = ADP + phosphate + H(+). Its function is as follows. The heterodimer acts as both an ATP-dependent DNA helicase and an ATP-dependent, dual-direction single-stranded exonuclease. Recognizes the chi site generating a DNA molecule suitable for the initiation of homologous recombination. The AddA nuclease domain is required for chi fragment generation; this subunit has the helicase and 3' -&gt; 5' nuclease activities. In Geobacillus kaustophilus (strain HTA426), this protein is ATP-dependent helicase/nuclease subunit A.